The primary structure comprises 522 residues: 2-isopropylmalate synthase (522 aa).

Residues 5-267 (VIIFDTTLRD…HTRINHQEIY (263 aa)) form the Pyruvate carboxyltransferase domain. Mn(2+) is bound by residues aspartate 14, histidine 202, histidine 204, and asparagine 238. A regulatory domain region spans residues 392–522 (RLDTFNVQSG…SQVKDQKETV (131 aa)).

Belongs to the alpha-IPM synthase/homocitrate synthase family. LeuA type 1 subfamily. In terms of assembly, homodimer. Mn(2+) is required as a cofactor.

It is found in the cytoplasm. The catalysed reaction is 3-methyl-2-oxobutanoate + acetyl-CoA + H2O = (2S)-2-isopropylmalate + CoA + H(+). It participates in amino-acid biosynthesis; L-leucine biosynthesis; L-leucine from 3-methyl-2-oxobutanoate: step 1/4. Its function is as follows. Catalyzes the condensation of the acetyl group of acetyl-CoA with 3-methyl-2-oxobutanoate (2-ketoisovalerate) to form 3-carboxy-3-hydroxy-4-methylpentanoate (2-isopropylmalate). The protein is 2-isopropylmalate synthase of Erwinia tasmaniensis (strain DSM 17950 / CFBP 7177 / CIP 109463 / NCPPB 4357 / Et1/99).